An 808-amino-acid polypeptide reads, in one-letter code: Phospholipase D alpha 1 (808 aa).

A propeptide spanning residues 1 to 30 (MAQISLHGTLHVTIYEVDKLHSGGGPHFFR) is cleaved from the precursor. Residues 1-125 (MAQISLHGTL…LDGEEIDRWV (125 aa)) enclose the C2 domain. Position 186 (aspartate 186) interacts with Ca(2+). The region spanning 326 to 364 (TMFTHHQKIVVVDSAMPNGDSQRRRIVSFVGGLDLCDGR) is the PLD phosphodiesterase 1 domain. Catalysis depends on residues histidine 331, lysine 333, and aspartate 338. An a 1,2-diacyl-sn-glycero-3-phosphate-binding site is contributed by histidine 331. Positions 370 and 404 each coordinate Ca(2+). A 1,2-diacyl-sn-glycero-3-phosphate is bound by residues glutamine 520 and histidine 659. Positions 654–681 (FMIYVHTKMMIVDDEYIIIGSANINQRS) constitute a PLD phosphodiesterase 2 domain. Residues histidine 659, lysine 661, and aspartate 666 contribute to the active site. Glutamate 720 contributes to the Ca(2+) binding site.

This sequence belongs to the phospholipase D family. C2-PLD subfamily. Requires Ca(2+) as cofactor. In terms of tissue distribution, expression is higher in radicle than in endosperm.

The protein resides in the cytoplasm. It localises to the membrane. It is found in the vacuole. The protein localises to the endoplasmic reticulum. Its subcellular location is the plastid. The protein resides in the cell membrane. The enzyme catalyses a 1,2-diacyl-sn-glycero-3-phosphocholine + H2O = a 1,2-diacyl-sn-glycero-3-phosphate + choline + H(+). Functionally, hydrolyzes glycerol-phospholipids at the terminal phosphodiesteric bond. Plays an important role in various cellular processes, including phytohormone action, vesicular trafficking, secretion, cytoskeletal arrangement, meiosis, tumor promotion, pathogenesis, membrane deterioration and senescence. This Ricinus communis (Castor bean) protein is Phospholipase D alpha 1 (PLD1).